A 585-amino-acid chain; its full sequence is CTP synthase (585 aa).

The interval 1-281 (MPALRKHPHT…DAYVVRRLNL (281 aa)) is amidoligase domain. Ser23 contacts CTP. Ser23 contributes to the UTP binding site. ATP-binding positions include 24 to 29 (SLGKGL) and Asp81. The Mg(2+) site is built by Asp81 and Glu155. Residues 162–164 (DIE), 202–207 (KTKPTQ), and Lys238 each bind CTP. UTP-binding positions include 202–207 (KTKPTQ) and Lys238. Residues 306–554 (RIALVGKYID…VGAAVEYNNG (249 aa)) enclose the Glutamine amidotransferase type-1 domain. Position 369 (Gly369) interacts with L-glutamine. Cys396 acts as the Nucleophile; for glutamine hydrolysis in catalysis. Residues 397–400 (LGLQ), Glu419, and Arg480 each bind L-glutamine. Catalysis depends on residues His527 and Glu529. A disordered region spans residues 564 to 585 (IPTADHQSNGAEHALEDAPARG). The segment covering 576 to 585 (HALEDAPARG) has biased composition (basic and acidic residues).

This sequence belongs to the CTP synthase family. In terms of assembly, homotetramer.

The catalysed reaction is UTP + L-glutamine + ATP + H2O = CTP + L-glutamate + ADP + phosphate + 2 H(+). The enzyme catalyses L-glutamine + H2O = L-glutamate + NH4(+). It catalyses the reaction UTP + NH4(+) + ATP = CTP + ADP + phosphate + 2 H(+). The protein operates within pyrimidine metabolism; CTP biosynthesis via de novo pathway; CTP from UDP: step 2/2. Allosterically activated by GTP, when glutamine is the substrate; GTP has no effect on the reaction when ammonia is the substrate. The allosteric effector GTP functions by stabilizing the protein conformation that binds the tetrahedral intermediate(s) formed during glutamine hydrolysis. Inhibited by the product CTP, via allosteric rather than competitive inhibition. Catalyzes the ATP-dependent amination of UTP to CTP with either L-glutamine or ammonia as the source of nitrogen. Regulates intracellular CTP levels through interactions with the four ribonucleotide triphosphates. The sequence is that of CTP synthase from Mycolicibacterium gilvum (strain PYR-GCK) (Mycobacterium gilvum (strain PYR-GCK)).